Reading from the N-terminus, the 307-residue chain is HPr kinase/phosphorylase (307 aa).

Residues H136 and K157 contribute to the active site. Residue G151–S158 coordinates ATP. S158 is a Mg(2+) binding site. D175 functions as the Proton acceptor; for phosphorylation activity. Proton donor; for dephosphorylation activity in the catalytic mechanism. Residues L198–D207 form an important for the catalytic mechanism of both phosphorylation and dephosphorylation region. E199 contributes to the Mg(2+) binding site. R240 is a catalytic residue. The segment at P261–R266 is important for the catalytic mechanism of dephosphorylation.

Belongs to the HPrK/P family. In terms of assembly, homohexamer. It depends on Mg(2+) as a cofactor.

The enzyme catalyses [HPr protein]-L-serine + ATP = [HPr protein]-O-phospho-L-serine + ADP + H(+). The catalysed reaction is [HPr protein]-O-phospho-L-serine + phosphate + H(+) = [HPr protein]-L-serine + diphosphate. Its function is as follows. Catalyzes the ATP- as well as the pyrophosphate-dependent phosphorylation of a specific serine residue in HPr, a phosphocarrier protein of the phosphoenolpyruvate-dependent sugar phosphotransferase system (PTS). HprK/P also catalyzes the pyrophosphate-producing, inorganic phosphate-dependent dephosphorylation (phosphorolysis) of seryl-phosphorylated HPr (P-Ser-HPr). The two antagonistic activities of HprK/P are regulated by several intracellular metabolites, which change their concentration in response to the absence or presence of rapidly metabolisable carbon sources (glucose, fructose, etc.) in the growth medium. Therefore, by controlling the phosphorylation state of HPr, HPrK/P is a sensor enzyme that plays a major role in the regulation of carbon metabolism and sugar transport: it mediates carbon catabolite repression (CCR), and regulates PTS-catalyzed carbohydrate uptake and inducer exclusion. This is HPr kinase/phosphorylase from Clostridium perfringens (strain 13 / Type A).